Reading from the N-terminus, the 525-residue chain is Cytochrome P450 monooxygenase bsc2 (525 aa).

The chain crosses the membrane as a helical span at residues 12–32 (SLFILWLTTLLVSVLATAAYI). Residues Asn-86 and Asn-317 are each glycosylated (N-linked (GlcNAc...) asparagine). Cys-456 contributes to the heme binding site.

Belongs to the cytochrome P450 family. It depends on heme as a cofactor.

The protein localises to the membrane. It functions in the pathway mycotoxin biosynthesis. Cytochrome P450 monooxygenase; part of the gene cluster that mediates the biosynthesis of the diterpene glucoside brassicicene C. In the first step of the brassicicene C biosynthesis, the bifunctional diterpene synthase bsc8 that possesses both prenyl transferase and terpene cyclase activity, converts isopentenyl diphosphate and dimethylallyl diphosphate into geranylgeranyl diphosphate (GGDP) that is further converted into fusicocca-2,10(14)-diene, the first precursor for brassicicene C. Fusicocca-2,10(14)-diene is then substrate of cytochrome P450 monooxygenase bsc1 for hydroxylation at the C-8 position. Oxidation at C-16 position to aldehyde is then catalyzed by the cytochrome P450 monooyxygenase bsc7, yielding fusicocca-2,10(14)-diene-8-beta,16-diol. Follows the isomerization of the double bond and reduction of aldehyde to alcohol catalyzed by the short-chain dehydrogenase/reductase bsc3 to yield the diol compound fusicocca-1,10(14)-diene-8 beta,16-diol. The next step is the oxidation at the C-3 position of fusicocca-2,10(14)-diene-8-beta,16-diol catalyzed by the alpha-ketoglutarate dependent dioxygenase bsc9, to produce a triol compound. Methylation of the hydroxy group at position 16 is performed by the methyltransferase bsc6. 16-O-methylation is followed by oxidation at the C-13 position to ketone and an alkyl shift of the methyl group leads to brassicicene C. Although the probable acetyltransferase bsc4 is included in the gene cluster, no acetylation reactions are necessary for brassicicene C biosynthesis. However, the fact that brassicicene E, which is a structurally related compound having an acetoxy group at position 12, was previously isolated from another strain of A.brassicicola suggests that the ATCC 96836 strain might also produce a small amount of brassicicene E. The sequence is that of Cytochrome P450 monooxygenase bsc2 from Alternaria brassicicola (Dark leaf spot agent).